The chain runs to 680 residues: Pilus tip adhesin Cpa (680 aa).

Residues 62 to 211 (CFNLTKHFPS…IFQSSDKTFQ (150 aa)) constitute a cross-link (isoglutamyl cysteine thioester (Cys-Gln)). The interval 217–236 (EYVPDTPPKPGEEPPAKTEK) is disordered. A compositionally biased stretch (basic and acidic residues) spans 226-236 (PGEEPPAKTEK). Positions 243-546 (KYAEGDYSKL…ELIDVISMED (304 aa)) form a cross-link, isoaspartyl lysine isopeptide (Lys-Asp). In terms of domain architecture, CNA-B spans 253-311 (LEGATLKLAQIEGSGFQEKIFDSNKSGEKVELPNGTYVLSELKPPQGYGVATPITFKVA). The isoglutamyl cysteine thioester (Cys-Gln) cross-link spans 374-526 (CFNADLHSPP…FFVPNSSRYQ (153 aa)). Positions 562–667 (KTVTGTIADK…KEDETVAFEN (106 aa)) form a cross-link, isoaspartyl lysine isopeptide (Lys-Asn). The VPPTG sorting signal signature appears at 672–676 (VPPTG). Thr-675 is covalently cross-linked (Threonyl lysine isopeptide (Thr-Lys) (interchain with K-? in major pilin subunit)). A propeptide spans 676–680 (GLTTD) (removed by sortase).

In terms of assembly, monomer. Proteolytically processed and assembled in pili through a transpeptidation reaction catalyzed by a sortase, which leads to a covalent link between Cpa and a major pilin subunit.

It is found in the fimbrium. In terms of biological role, component of the pilus tip. Can bind covalently, via its two reactive thioester bonds, to molecular targets from host cell surface and can thus mediate adhesion of the streptococcal pili to host cells. Lysine side chains or a carbohydrate with a free amine group might be candidates for Cpa binding. In vitro, can covalently bind to spermidine, but it is unlikely that spermidine is the natural target of Cpa. The sequence is that of Pilus tip adhesin Cpa (cpa) from Streptococcus pyogenes.